The sequence spans 497 residues: Ganglioside-induced differentiation-associated protein 2 (497 aa).

Positions 43–223 (RSPFLYNKDI…TYQKLLPLYF (181 aa)) constitute a Macro domain. A disordered region spans residues 251 to 273 (PERQIRISEKPGAPEDNQEEEDE). Positions 253–263 (RQIRISEKPGA) are enriched in basic and acidic residues. A Phosphoserine modification is found at S280. One can recognise a CRAL-TRIO domain in the interval 333-481 (DIASLKALYQ…FPPFVLEYDA (149 aa)).

It belongs to the GDAP2 family.

The protein is Ganglioside-induced differentiation-associated protein 2 (GDAP2) of Bos taurus (Bovine).